The primary structure comprises 413 residues: SWIRM domain-containing protein FUN19 (413 aa).

The span at 35 to 51 shows a compositional bias: low complexity; the sequence is KASNNNNDSNKNGLNMS. Disordered regions lie at residues 35–55, 189–211, and 249–271; these read KASN…DYSN, YNDD…PLAS, and YSPQ…PSAS. A Phosphothreonine modification is found at T194. Positions 200–211 are enriched in low complexity; that stretch reads SSSSRLPSPLAS. Phosphoserine is present on residues S207 and S211. Residues 316–413 enclose the SWIRM domain; sequence LKIEWKGSPM…LQDSNFTKYL (98 aa).

This Saccharomyces cerevisiae (strain ATCC 204508 / S288c) (Baker's yeast) protein is SWIRM domain-containing protein FUN19 (FUN19).